Reading from the N-terminus, the 54-residue chain is Lectin alpha-1 chain (54 aa).

The protein belongs to the leguminous lectin family. Tetramer of two alpha and two beta chains.

This Lathyrus cicera (Flat-pod pea) protein is Lectin alpha-1 chain.